A 197-amino-acid polypeptide reads, in one-letter code: Neurturin (197 aa).

Residues 1–19 (MQRWKAAALASVLCSSVLS) form the signal peptide. Positions 20–95 (IWMCREGLLL…RAGPRRRRAR (76 aa)) are excised as a propeptide. The disordered stretch occupies residues 74–93 (TPWAGRPPGPRRRAGPRRRR). The segment covering 82–93 (GPRRRAGPRRRR) has biased composition (basic residues). Disulfide bonds link Cys-103–Cys-165, Cys-130–Cys-194, and Cys-134–Cys-196. Heparan sulfate group contacts are provided by Arg-149, Arg-158, Arg-160, and Gln-162.

Belongs to the TGF-beta family. GDNF subfamily. As to quaternary structure, homodimer; disulfide-linked. Interacts with GFRA2 coreceptor and RET: forms a 2:2:2 ternary complex composed of NRTN ligand, GFRA2 and RET receptor. Also forms a 4:4:4 tetrameric complex composed of 4 copies of NRTN ligand, GFRA2 and RET receptor, which prevents endocytosis of RET.

The protein localises to the secreted. Its function is as follows. Growth factor that supports the survival of sympathetic neurons in culture. May regulate the development and maintenance of the CNS. Involved in the development of the neural crest. Might control the size of non-neuronal cell population such as haemopoietic cells. Acts by binding to its coreceptor, GFRA2, leading to autophosphorylation and activation of the RET receptor. Heparan sulfate-binding is required for signaling. The chain is Neurturin from Homo sapiens (Human).